The following is a 436-amino-acid chain: Succinyl-CoA:glutarate CoA-transferase (436 aa).

The transit peptide at 1-8 directs the protein to the mitochondrion; the sequence is MLWMLARA. The active-site Nucleophile is D203. An N6-acetyllysine mark is found at K392 and K423.

This sequence belongs to the CoA-transferase III family.

Its subcellular location is the mitochondrion. The catalysed reaction is glutarate + succinyl-CoA = glutaryl-CoA + succinate. It carries out the reaction 3-hydroxy-3-methylglutarate + succinyl-CoA = (3S)-3-hydroxy-3-methylglutaryl-CoA + succinate. It catalyses the reaction 3-hydroxy-3-methylglutarate + glutaryl-CoA = (3S)-3-hydroxy-3-methylglutaryl-CoA + glutarate. The enzyme catalyses hexanedioate + glutaryl-CoA = hexanedioyl-CoA + glutarate. The catalysed reaction is itaconate + glutaryl-CoA = itaconyl-CoA + glutarate. It carries out the reaction itaconate + succinyl-CoA = itaconyl-CoA + succinate. Coenzyme A (CoA) transferase that reversibly catalyzes the transfer of a CoA moiety from a dicarboxyl-CoA to a dicarboxylate in a metabolite recycling process. Displays preference for succinyl-CoA and glutarate-CoA as dicarboxyl-CoA donors and glutarate, succinate, adipate/hexanedioate, itaconate and 3-hydroxy-3-methylglutarate as dicarboxylate acceptors. Acts on intermediates or end products of lysine and tryptophan degradation pathway, in particular catalyzes succinyl-CoA-dependent reesterification of free glutarate into glutaryl-CoA to prevent renal excretion of glutarate. Upon inflammation, may convert macrophage-derived itaconate to itaconyl-CoA in erythroid precursors where it negatively regulates the TCA cycle and heme synthesis to limit erythroid differentiation in the context of stress erythropoiesis. In Mus musculus (Mouse), this protein is Succinyl-CoA:glutarate CoA-transferase.